We begin with the raw amino-acid sequence, 290 residues long: ATP synthase gamma chain (290 aa).

The protein belongs to the ATPase gamma chain family. In terms of assembly, F-type ATPases have 2 components, CF(1) - the catalytic core - and CF(0) - the membrane proton channel. CF(1) has five subunits: alpha(3), beta(3), gamma(1), delta(1), epsilon(1). CF(0) has three main subunits: a, b and c.

The protein resides in the cell inner membrane. Produces ATP from ADP in the presence of a proton gradient across the membrane. The gamma chain is believed to be important in regulating ATPase activity and the flow of protons through the CF(0) complex. This is ATP synthase gamma chain from Desulfotalea psychrophila (strain LSv54 / DSM 12343).